We begin with the raw amino-acid sequence, 394 residues long: Elongation factor Tu 1 (394 aa).

The 195-residue stretch at 10–204 folds into the tr-type G domain; the sequence is KPHVNVGTIG…YLDSYIPEPE (195 aa). Residues 19 to 26 are G1; the sequence is GHVDHGKT. 19-26 contacts GTP; sequence GHVDHGKT. Mg(2+) is bound at residue T26. The interval 60 to 64 is G2; sequence GITIN. Positions 81–84 are G3; the sequence is DCPG. Residues 81–85 and 136–139 contribute to the GTP site; these read DCPGH and NKCD. The segment at 136-139 is G4; that stretch reads NKCD. The G5 stretch occupies residues 174-176; it reads SAL.

It belongs to the TRAFAC class translation factor GTPase superfamily. Classic translation factor GTPase family. EF-Tu/EF-1A subfamily. Monomer.

The protein resides in the cytoplasm. The enzyme catalyses GTP + H2O = GDP + phosphate + H(+). GTP hydrolase that promotes the GTP-dependent binding of aminoacyl-tRNA to the A-site of ribosomes during protein biosynthesis. The sequence is that of Elongation factor Tu 1 from Serratia proteamaculans (strain 568).